Consider the following 261-residue polypeptide: UPF0328 protein ECU02_0020/ECU04_1700 (261 aa).

The disordered stretch occupies residues 1 to 20 (MSITSIPQPHETNEQHHTEI). A compositionally biased stretch (basic and acidic residues) spans 11–20 (ETNEQHHTEI).

Belongs to the UPF0328 family.

This chain is UPF0328 protein ECU02_0020/ECU04_1700, found in Encephalitozoon cuniculi (strain GB-M1) (Microsporidian parasite).